A 255-amino-acid polypeptide reads, in one-letter code: GTP cyclohydrolase III (255 aa).

It belongs to the archaeal-type GTP cyclohydrolase family.

The catalysed reaction is GTP + 3 H2O = 2-amino-5-formylamino-6-(5-phospho-D-ribosylamino)pyrimidin-4(3H)-one + 2 phosphate + 2 H(+). Functionally, catalyzes the formation of 2-amino-5-formylamino-6-ribofuranosylamino-4(3H)-pyrimidinone ribonucleotide monophosphate and inorganic phosphate from GTP. Also has an independent pyrophosphate phosphohydrolase activity. This chain is GTP cyclohydrolase III, found in Methanosphaera stadtmanae (strain ATCC 43021 / DSM 3091 / JCM 11832 / MCB-3).